Reading from the N-terminus, the 296-residue chain is MQFEKVTYIAVPQKYGQKKVGVEEGPKFLEKLGFMNVLEQVAKSVNKKTITEPKTPQELGVTNARNLNEVESVNIELRDTIAKEYDVNNLLINIGGDHSIGLGTIAGVVKAMKPNARVGVVWFDAHPDMNTPENSPSGNIHGMPLACAVGLGPQRLTSIMPHYITPKDIMYVGIRSIDVGEQFEIQDKHIDHFTAEDVKRVGMKEVIEAINKKFVDYDVIHLSFDIDGIDPEFILGTGTPVPKGISLEDSLYFMSEMGKMKKLHSVDIVEYNPKIEEEITGKNVLKCISSLFGIKC.

Mn(2+) is bound by residues histidine 98, aspartate 124, histidine 126, and aspartate 128. 3 residues coordinate L-arginine: asparagine 130, serine 137, and aspartate 178. 2 residues coordinate Mn(2+): aspartate 225 and aspartate 227. 2 residues coordinate L-arginine: aspartate 227 and threonine 239.

This sequence belongs to the arginase family. Monomer. Homodimer; dimerization is dispensable for catalytic activity. Mn(2+) serves as cofactor.

The catalysed reaction is L-arginine + H2O = urea + L-ornithine. It functions in the pathway nitrogen metabolism; urea cycle; L-ornithine and urea from L-arginine: step 1/1. With respect to regulation, substitution of the loosely bound surface exposed Mn(2+) with Mg(2+), Zn(2+), Ni(2+) or Co(2+) results in similar catalytic activity, substitution with Cd(2+) and Cu(2+) reduces catalytic activity and substitution with Hg(2+) and Ca(2+) inhibits the enzyme. Inhibited by L-norvaline. Its function is as follows. Catalyzes the hydrolysis of L-arginine into urea and L-ornithine, which is a precursor for polyamine biosynthesis. By depleting host L-arginine, a substrate for nitric oxide synthase (NOS), prevents the production of nitric oxide (NO) by host activated macrophages, and thus allows the parasite to evade host immune response. The protein is Arginase of Entamoeba histolytica (strain ATCC 30459 / HM-1:IMSS / ABRM).